A 648-amino-acid polypeptide reads, in one-letter code: Biosynthetic arginine decarboxylase (648 aa).

K109 carries the post-translational modification N6-(pyridoxal phosphate)lysine. Residue 291–301 (IDVGGGLGIDF) participates in substrate binding.

It belongs to the Orn/Lys/Arg decarboxylase class-II family. SpeA subfamily. Mg(2+) is required as a cofactor. It depends on pyridoxal 5'-phosphate as a cofactor.

It carries out the reaction L-arginine + H(+) = agmatine + CO2. It participates in amine and polyamine biosynthesis; agmatine biosynthesis; agmatine from L-arginine: step 1/1. In terms of biological role, catalyzes the biosynthesis of agmatine from arginine. This chain is Biosynthetic arginine decarboxylase, found in Prochlorococcus marinus (strain MIT 9515).